We begin with the raw amino-acid sequence, 156 residues long: Protein-export protein SecB (156 aa).

The protein belongs to the SecB family. Homotetramer, a dimer of dimers. One homotetramer interacts with 1 SecA dimer.

The protein resides in the cytoplasm. One of the proteins required for the normal export of preproteins out of the cell cytoplasm. It is a molecular chaperone that binds to a subset of precursor proteins, maintaining them in a translocation-competent state. It also specifically binds to its receptor SecA. The sequence is that of Protein-export protein SecB from Xanthobacter autotrophicus (strain ATCC BAA-1158 / Py2).